A 62-amino-acid chain; its full sequence is MAKRCALTFKGPMIGNHVSHANNKNKRRLLPNLRSIKIQLDDGTTKRIKVAASTLRTMRKGA.

Belongs to the bacterial ribosomal protein bL28 family.

This is Large ribosomal subunit protein bL28 from Helicobacter pylori (strain P12).